The primary structure comprises 323 residues: DNA-directed RNA polymerase subunit alpha 1 (323 aa).

The tract at residues 1–228 (MSNNNSKLEF…EQISVFVSLR (228 aa)) is alpha N-terminal domain (alpha-NTD). An alpha C-terminal domain (alpha-CTD) region spans residues 244–323 (IDPILLKPID…DNFRELVEGK (80 aa)).

This sequence belongs to the RNA polymerase alpha chain family. As to quaternary structure, homodimer. The RNAP catalytic core consists of 2 alpha, 1 beta, 1 beta' and 1 omega subunit. When a sigma factor is associated with the core the holoenzyme is formed, which can initiate transcription.

It carries out the reaction RNA(n) + a ribonucleoside 5'-triphosphate = RNA(n+1) + diphosphate. Functionally, DNA-dependent RNA polymerase catalyzes the transcription of DNA into RNA using the four ribonucleoside triphosphates as substrates. This Francisella tularensis subsp. tularensis (strain FSC 198) protein is DNA-directed RNA polymerase subunit alpha 1.